The primary structure comprises 132 residues: Aspartate 1-decarboxylase (132 aa).

Serine 25 functions as the Schiff-base intermediate with substrate; via pyruvic acid in the catalytic mechanism. Serine 25 is modified (pyruvic acid (Ser)). Threonine 57 is a binding site for substrate. The active-site Proton donor is tyrosine 58. 73–75 (GAA) is a binding site for substrate.

Belongs to the PanD family. In terms of assembly, heterooctamer of four alpha and four beta subunits. Pyruvate is required as a cofactor. In terms of processing, is synthesized initially as an inactive proenzyme, which is activated by self-cleavage at a specific serine bond to produce a beta-subunit with a hydroxyl group at its C-terminus and an alpha-subunit with a pyruvoyl group at its N-terminus.

It localises to the cytoplasm. The enzyme catalyses L-aspartate + H(+) = beta-alanine + CO2. It participates in cofactor biosynthesis; (R)-pantothenate biosynthesis; beta-alanine from L-aspartate: step 1/1. Its function is as follows. Catalyzes the pyruvoyl-dependent decarboxylation of aspartate to produce beta-alanine. The protein is Aspartate 1-decarboxylase of Heliobacterium modesticaldum (strain ATCC 51547 / Ice1).